We begin with the raw amino-acid sequence, 704 residues long: MAANAPIEKIRNIGISAHIDSGKTTLSERILFYTGRIHEIHEVRGKDGVGAIMDNMDLEREKGITIQSAATFAMWGEYNINLIDTPGHVDFTIEVERSLRVLDGAILVLCSVAGVQSQSITVDRQMKRYRVPRIAFVNKMDRSGANYDRVAAQLKEKLNHHPVQMQMPIGAEDRLKGLINLIEMKAYYFDGESGEDIREEEIPAELLEEAKTRRQQMIEGVAEVDDQLGELFLADQPISNEALIAAVRRATIGLKMTPVMCGSAYKNKGVQLLLNAVCAFLPNPKEATNEALDQKNNEAKVILDSDPEKPFVGLAFKLEDGRYGQLTYMRIYQGRVTKGDFIINQSNQKKVKVPRIVRMHSSQMNDINEATAGDIVALFGIECASGDTFTDGVVNYTMTSMHVPDAVISLAVAPKDRSNLTNFSKALNRFTKEDPTFRVHRDEESGQTIIRGMGELHLEIYIERMKREYNCEVQAGKPQVAYRETISQKGEFAYTHKKQTGGSGQFARVCGYIEPLPSDAVQQYEFVDDIVGGSIPREFIPACDKGFTEAVKKGSLIGFPVVGVRVVINDGAFHAVDSSEMAFKTAAIMGFREGYAAAKPIILEPMMKVEVQAPEDFQGSVVGQLNQRRGTILSTETAEGYVTAVAEVPLNTMFGYSTDLRSATQGKGEYTMEFSRYTPVPRNESEALMAAYKEKLAAEQAARK.

Residues 8 to 285 form the tr-type G domain; it reads EKIRNIGISA…AVCAFLPNPK (278 aa). GTP contacts are provided by residues 17-24, 84-88, and 138-141; these read AHIDSGKT, DTPGH, and NKMD.

The protein belongs to the TRAFAC class translation factor GTPase superfamily. Classic translation factor GTPase family. EF-G/EF-2 subfamily.

It localises to the cytoplasm. In terms of biological role, catalyzes the GTP-dependent ribosomal translocation step during translation elongation. During this step, the ribosome changes from the pre-translocational (PRE) to the post-translocational (POST) state as the newly formed A-site-bound peptidyl-tRNA and P-site-bound deacylated tRNA move to the P and E sites, respectively. Catalyzes the coordinated movement of the two tRNA molecules, the mRNA and conformational changes in the ribosome. This is Elongation factor G 1 from Myxococcus xanthus (strain DK1622).